The following is a 354-amino-acid chain: 3-isopropylmalate dehydrogenase (354 aa).

76-87 (GPRWDGAKERPE) contacts NAD(+). Residues arginine 94, arginine 104, arginine 130, and aspartate 215 each coordinate substrate. Mg(2+)-binding residues include aspartate 215, aspartate 239, and aspartate 243. Position 273–285 (273–285 (GSAPDIAGKNKAN)) interacts with NAD(+).

The protein belongs to the isocitrate and isopropylmalate dehydrogenases family. LeuB type 1 subfamily. In terms of assembly, homodimer. It depends on Mg(2+) as a cofactor. Mn(2+) serves as cofactor.

The protein localises to the cytoplasm. It catalyses the reaction (2R,3S)-3-isopropylmalate + NAD(+) = 4-methyl-2-oxopentanoate + CO2 + NADH. It participates in amino-acid biosynthesis; L-leucine biosynthesis; L-leucine from 3-methyl-2-oxobutanoate: step 3/4. Catalyzes the oxidation of 3-carboxy-2-hydroxy-4-methylpentanoate (3-isopropylmalate) to 3-carboxy-4-methyl-2-oxopentanoate. The product decarboxylates to 4-methyl-2 oxopentanoate. This is 3-isopropylmalate dehydrogenase from Bacillus thuringiensis subsp. konkukian (strain 97-27).